Consider the following 153-residue polypeptide: Coiled-coil domain-containing protein 182 (153 aa).

Residues 46–109 (ADLEILQQKV…RLREEEDRGI (64 aa)) adopt a coiled-coil conformation.

This is Coiled-coil domain-containing protein 182 (CCDC182) from Homo sapiens (Human).